The primary structure comprises 321 residues: Tetraacyldisaccharide 4'-kinase (321 aa).

54 to 61 (SVGGTGKT) is a binding site for ATP.

The protein belongs to the LpxK family.

The enzyme catalyses a lipid A disaccharide + ATP = a lipid IVA + ADP + H(+). The protein operates within glycolipid biosynthesis; lipid IV(A) biosynthesis; lipid IV(A) from (3R)-3-hydroxytetradecanoyl-[acyl-carrier-protein] and UDP-N-acetyl-alpha-D-glucosamine: step 6/6. Functionally, transfers the gamma-phosphate of ATP to the 4'-position of a tetraacyldisaccharide 1-phosphate intermediate (termed DS-1-P) to form tetraacyldisaccharide 1,4'-bis-phosphate (lipid IVA). The chain is Tetraacyldisaccharide 4'-kinase from Rickettsia rickettsii.